The following is a 155-amino-acid chain: Small ribosomal subunit protein uS9 (155 aa).

It belongs to the universal ribosomal protein uS9 family.

In Rhizobium meliloti (strain 1021) (Ensifer meliloti), this protein is Small ribosomal subunit protein uS9.